The chain runs to 640 residues: Threonine--tRNA ligase (640 aa).

Positions 1–61 (MPVVTLPDGS…DKDSHLAIIT (61 aa)) constitute a TGS domain. The segment at 242-533 (DHRRLGKQLD…LIENHAGNMP (292 aa)) is catalytic. Zn(2+) contacts are provided by C333, H384, and H510.

It belongs to the class-II aminoacyl-tRNA synthetase family. Homodimer. Zn(2+) is required as a cofactor.

Its subcellular location is the cytoplasm. The catalysed reaction is tRNA(Thr) + L-threonine + ATP = L-threonyl-tRNA(Thr) + AMP + diphosphate + H(+). Its function is as follows. Catalyzes the attachment of threonine to tRNA(Thr) in a two-step reaction: L-threonine is first activated by ATP to form Thr-AMP and then transferred to the acceptor end of tRNA(Thr). Also edits incorrectly charged L-seryl-tRNA(Thr). This is Threonine--tRNA ligase from Polynucleobacter asymbioticus (strain DSM 18221 / CIP 109841 / QLW-P1DMWA-1) (Polynucleobacter necessarius subsp. asymbioticus).